Consider the following 428-residue polypeptide: Adenylosuccinate synthetase (428 aa).

Residues 12–18 (GDEGKGK) and 40–42 (GHT) each bind GTP. D13 (proton acceptor) is an active-site residue. Mg(2+) is bound by residues D13 and G40. Residues 13–16 (DEGK), 38–41 (NAGH), T128, R142, Q223, T238, and R302 each bind IMP. H41 functions as the Proton donor in the catalytic mechanism. Residue 298 to 304 (VTTGRPR) coordinates substrate. GTP contacts are provided by residues R304, 330 to 332 (KLD), and 412 to 414 (GTG).

Belongs to the adenylosuccinate synthetase family. Homodimer. The cofactor is Mg(2+).

The protein localises to the cytoplasm. It carries out the reaction IMP + L-aspartate + GTP = N(6)-(1,2-dicarboxyethyl)-AMP + GDP + phosphate + 2 H(+). It participates in purine metabolism; AMP biosynthesis via de novo pathway; AMP from IMP: step 1/2. Its function is as follows. Plays an important role in the de novo pathway of purine nucleotide biosynthesis. Catalyzes the first committed step in the biosynthesis of AMP from IMP. This Bifidobacterium adolescentis (strain ATCC 15703 / DSM 20083 / NCTC 11814 / E194a) protein is Adenylosuccinate synthetase.